A 386-amino-acid chain; its full sequence is DNA (cytosine-5)-methyltransferase 3-like (386 aa).

The 133-residue stretch at 41 to 173 (EVKANQRNIE…LKAFYDRESE (133 aa)) folds into the ADD domain. The segment at 52–82 (ICICCGSLQVHTQHPLFEGGICAPCKDKFLD) adopts a GATA-type; atypical zinc-finger fold. Residues 93–149 (QSYCSICCSGETLLICGNPDCTRCYCFECVDSLVGPGTSGKVHAMSNWVCYLCLPSS) form a PHD-type; atypical zinc finger.

As to quaternary structure, homodimer. Heterotetramer composed of 1 DNMT3A homodimer and 2 DNMT3L subunits (DNMT3L-DNMT3A-DNMT3A-DNMT3L). Interacts with histone H3 (via N-terminus); interaction is strongly inhibited by methylation at lysine 4 (H3K4me). Interacts with EZH2; the interaction is direct. Interacts with SPOCD1. In terms of tissue distribution, expressed at low levels in several tissues including testis, ovary, and thymus.

It is found in the nucleus. Catalytically inactive regulatory factor of DNA methyltransferases that can either promote or inhibit DNA methylation depending on the context. Essential for the function of DNMT3A and DNMT3B: activates DNMT3A and DNMT3B by binding to their catalytic domain. Acts by accelerating the binding of DNA and S-adenosyl-L-methionine (AdoMet) to the methyltransferases and dissociates from the complex after DNA binding to the methyltransferases. Recognizes unmethylated histone H3 lysine 4 (H3K4me0) and induces de novo DNA methylation by recruitment or activation of DNMT3. Plays a key role in embryonic stem cells and germ cells. In germ cells, required for the methylation of imprinted loci together with DNMT3A. In male germ cells, specifically required to methylate retrotransposons, preventing their mobilization. Plays a key role in embryonic stem cells (ESCs) by acting both as an positive and negative regulator of DNA methylation. While it promotes DNA methylation of housekeeping genes together with DNMT3A and DNMT3B, it also acts as an inhibitor of DNA methylation at the promoter of bivalent genes. Interacts with the EZH2 component of the PRC2/EED-EZH2 complex, preventing interaction of DNMT3A and DNMT3B with the PRC2/EED-EZH2 complex, leading to maintain low methylation levels at the promoters of bivalent genes. Promotes differentiation of ESCs into primordial germ cells by inhibiting DNA methylation at the promoter of RHOX5, thereby activating its expression. This Homo sapiens (Human) protein is DNA (cytosine-5)-methyltransferase 3-like (DNMT3L).